Reading from the N-terminus, the 60-residue chain is Ribosome biogenesis protein Nop10 (60 aa).

Belongs to the NOP10 family.

In terms of biological role, involved in ribosome biogenesis; more specifically in 18S rRNA pseudouridylation and in cleavage of pre-rRNA. The chain is Ribosome biogenesis protein Nop10 from Haloquadratum walsbyi (strain DSM 16790 / HBSQ001).